Here is a 356-residue protein sequence, read N- to C-terminus: S-adenosylmethionine:tRNA ribosyltransferase-isomerase (356 aa).

This sequence belongs to the QueA family. In terms of assembly, monomer.

The protein resides in the cytoplasm. It carries out the reaction 7-aminomethyl-7-carbaguanosine(34) in tRNA + S-adenosyl-L-methionine = epoxyqueuosine(34) in tRNA + adenine + L-methionine + 2 H(+). Its pathway is tRNA modification; tRNA-queuosine biosynthesis. Functionally, transfers and isomerizes the ribose moiety from AdoMet to the 7-aminomethyl group of 7-deazaguanine (preQ1-tRNA) to give epoxyqueuosine (oQ-tRNA). This Escherichia fergusonii (strain ATCC 35469 / DSM 13698 / CCUG 18766 / IAM 14443 / JCM 21226 / LMG 7866 / NBRC 102419 / NCTC 12128 / CDC 0568-73) protein is S-adenosylmethionine:tRNA ribosyltransferase-isomerase.